We begin with the raw amino-acid sequence, 487 residues long: Glutamyl-tRNA(Gln) amidotransferase subunit A (487 aa).

Residues K74 and S149 each act as charge relay system in the active site. Catalysis depends on S173, which acts as the Acyl-ester intermediate.

It belongs to the amidase family. GatA subfamily. In terms of assembly, heterotrimer of A, B and C subunits.

It catalyses the reaction L-glutamyl-tRNA(Gln) + L-glutamine + ATP + H2O = L-glutaminyl-tRNA(Gln) + L-glutamate + ADP + phosphate + H(+). Its function is as follows. Allows the formation of correctly charged Gln-tRNA(Gln) through the transamidation of misacylated Glu-tRNA(Gln) in organisms which lack glutaminyl-tRNA synthetase. The reaction takes place in the presence of glutamine and ATP through an activated gamma-phospho-Glu-tRNA(Gln). This Prochlorococcus marinus (strain MIT 9211) protein is Glutamyl-tRNA(Gln) amidotransferase subunit A.